The following is a 469-amino-acid chain: Sulfate adenylyltransferase subunit 1 (469 aa).

Residues 22–236 form the tr-type G domain; the sequence is KDMLRFLTCG…TLENIEIGND (215 aa). The interval 31 to 38 is G1; that stretch reads GSVDDGKS. 31 to 38 serves as a coordination point for GTP; it reads GSVDDGKS. The tract at residues 89–93 is G2; that stretch reads GITID. Residues 110–113 are G3; the sequence is DTPG. Residues 110–114 and 165–168 contribute to the GTP site; these read DTPGH and NKMD. The segment at 165–168 is G4; that stretch reads NKMD. Positions 202–204 are G5; the sequence is SAL.

Belongs to the TRAFAC class translation factor GTPase superfamily. Classic translation factor GTPase family. CysN/NodQ subfamily. As to quaternary structure, heterodimer composed of CysD, the smaller subunit, and CysN.

It catalyses the reaction sulfate + ATP + H(+) = adenosine 5'-phosphosulfate + diphosphate. Its pathway is sulfur metabolism; hydrogen sulfide biosynthesis; sulfite from sulfate: step 1/3. Its function is as follows. With CysD forms the ATP sulfurylase (ATPS) that catalyzes the adenylation of sulfate producing adenosine 5'-phosphosulfate (APS) and diphosphate, the first enzymatic step in sulfur assimilation pathway. APS synthesis involves the formation of a high-energy phosphoric-sulfuric acid anhydride bond driven by GTP hydrolysis by CysN coupled to ATP hydrolysis by CysD. This is Sulfate adenylyltransferase subunit 1 from Pseudoalteromonas atlantica (strain T6c / ATCC BAA-1087).